A 283-amino-acid polypeptide reads, in one-letter code: Shikimate dehydrogenase (NADP(+)) (283 aa).

Shikimate contacts are provided by residues Ser-22–Ser-24 and Thr-69. The Proton acceptor role is filled by Lys-73. Residues Asn-93 and Asp-108 each contribute to the shikimate site. NADP(+) contacts are provided by residues Gly-133–Ser-137 and Leu-222. Tyr-224 provides a ligand contact to shikimate. Position 245 (Gly-245) interacts with NADP(+).

It belongs to the shikimate dehydrogenase family. Homodimer.

It catalyses the reaction shikimate + NADP(+) = 3-dehydroshikimate + NADPH + H(+). The protein operates within metabolic intermediate biosynthesis; chorismate biosynthesis; chorismate from D-erythrose 4-phosphate and phosphoenolpyruvate: step 4/7. In terms of biological role, involved in the biosynthesis of the chorismate, which leads to the biosynthesis of aromatic amino acids. Catalyzes the reversible NADPH linked reduction of 3-dehydroshikimate (DHSA) to yield shikimate (SA). The chain is Shikimate dehydrogenase (NADP(+)) from Rhodopseudomonas palustris (strain BisB5).